Consider the following 452-residue polypeptide: Bifunctional protein GlmU (452 aa).

The interval 1–225 (MDVVILAAGL…ENELIGINTR (225 aa)) is pyrophosphorylase. Residues 6-9 (LAAG), K20, Q71, and 76-77 (GT) contribute to the UDP-N-acetyl-alpha-D-glucosamine site. D99 provides a ligand contact to Mg(2+). UDP-N-acetyl-alpha-D-glucosamine-binding residues include G136, E151, N166, and N223. N223 is a binding site for Mg(2+). The tract at residues 226-246 (AELSLAMRYLRDRIVKGWMEK) is linker. Residues 247 to 452 (GITFYDPALV…LGWAKKKRKQ (206 aa)) are N-acetyltransferase. UDP-N-acetyl-alpha-D-glucosamine contacts are provided by R329 and K347. The active-site Proton acceptor is the H359. UDP-N-acetyl-alpha-D-glucosamine contacts are provided by Y362 and N373. Acetyl-CoA is bound by residues A376, 382–383 (NY), S401, A419, and R436.

The protein in the N-terminal section; belongs to the N-acetylglucosamine-1-phosphate uridyltransferase family. In the C-terminal section; belongs to the transferase hexapeptide repeat family. As to quaternary structure, homotrimer. The cofactor is Mg(2+).

The protein resides in the cytoplasm. The catalysed reaction is alpha-D-glucosamine 1-phosphate + acetyl-CoA = N-acetyl-alpha-D-glucosamine 1-phosphate + CoA + H(+). It carries out the reaction N-acetyl-alpha-D-glucosamine 1-phosphate + UTP + H(+) = UDP-N-acetyl-alpha-D-glucosamine + diphosphate. It participates in nucleotide-sugar biosynthesis; UDP-N-acetyl-alpha-D-glucosamine biosynthesis; N-acetyl-alpha-D-glucosamine 1-phosphate from alpha-D-glucosamine 6-phosphate (route II): step 2/2. Its pathway is nucleotide-sugar biosynthesis; UDP-N-acetyl-alpha-D-glucosamine biosynthesis; UDP-N-acetyl-alpha-D-glucosamine from N-acetyl-alpha-D-glucosamine 1-phosphate: step 1/1. It functions in the pathway bacterial outer membrane biogenesis; LPS lipid A biosynthesis. Catalyzes the last two sequential reactions in the de novo biosynthetic pathway for UDP-N-acetylglucosamine (UDP-GlcNAc). The C-terminal domain catalyzes the transfer of acetyl group from acetyl coenzyme A to glucosamine-1-phosphate (GlcN-1-P) to produce N-acetylglucosamine-1-phosphate (GlcNAc-1-P), which is converted into UDP-GlcNAc by the transfer of uridine 5-monophosphate (from uridine 5-triphosphate), a reaction catalyzed by the N-terminal domain. This chain is Bifunctional protein GlmU, found in Thermodesulfovibrio yellowstonii (strain ATCC 51303 / DSM 11347 / YP87).